The following is a 222-amino-acid chain: Charged multivesicular body protein 3 (222 aa).

Residue Gly-2 is the site of N-myristoyl glycine attachment. Positions 2–113 (GLFGKTQEKP…LQKSTEVMKA (112 aa)) are intramolecular interaction with C-terminus. Positions 22–54 (KIRKEMRVVDRQIRDIQREEEKVKRSVKDAAKK) form a coiled coil. Important for autoinhibitory function regions lie at residues 59–64 (VCVVLA) and 168–169 (IL). The stretch at 149–222 (ESMDDQEEME…MQSRLATLRS (74 aa)) forms a coiled coil. The intramolecular interaction with N-terminus stretch occupies residues 151-220 (MDDQEEMEEA…EAMQSRLATL (70 aa)). The segment at 151–222 (MDDQEEMEEA…MQSRLATLRS (72 aa)) is interaction with VPS4A. Residue Lys-179 forms a Glycyl lysine isopeptide (Lys-Gly) (interchain with G-Cter in ubiquitin) linkage. The tract at residues 180–222 (APSKVTDALPEPEPLGAMAASEDEEEEEEALEAMQSRLATLRS) is disordered. 3 interaction with STAMBP regions span residues 196 to 222 (AMAASEDEEEEEEALEAMQSRLATLRS), 203 to 207 (EEEEE), and 221 to 222 (RS). Residue Ser-200 is modified to Phosphoserine. The segment covering 200 to 210 (SEDEEEEEEAL) has biased composition (acidic residues). The MIT-interacting motif signature appears at 201 to 211 (EDEEEEEEALE).

This sequence belongs to the SNF7 family. In terms of assembly, probable core component of the endosomal sorting required for transport complex III (ESCRT-III). ESCRT-III components are thought to multimerize to form a flat lattice on the perimeter membrane of the endosome. Several assembly forms of ESCRT-III may exist that interact and act sequentially. Forms a metastable monomer in solution; its core structure (without part of the putative autoinhibitory C-terminal acidic region) oligomerizes into a flat lattice via two different dimerization interfaces. In vitro, heteromerizes with CHMP2A (but not CHMP4) to form helical tubular structures that expose membrane-interacting sites on the outside whereas VPS4B can associate on the inside of the tubule. May interact with IGFBP7; the relevance of such interaction however remains unclear. Interacts with CHMP2A. Interacts with CHMP4A; the interaction requires the release of CHMP4A autoinhibition. Interacts with VPS4A. Interacts with STAMBP; the interaction appears to relieve the autoinhibition of CHMP3. Interacts with VTA1.

The protein resides in the cytoplasm. The protein localises to the cytosol. It localises to the membrane. Its subcellular location is the endosome. It is found in the late endosome membrane. Its function is as follows. Probable core component of the endosomal sorting required for transport complex III (ESCRT-III) which is involved in multivesicular bodies (MVBs) formation and sorting of endosomal cargo proteins into MVBs. MVBs contain intraluminal vesicles (ILVs) that are generated by invagination and scission from the limiting membrane of the endosome and mostly are delivered to lysosomes enabling degradation of membrane proteins, such as stimulated growth factor receptors, lysosomal enzymes and lipids. The MVB pathway appears to require the sequential function of ESCRT-O, -I,-II and -III complexes. ESCRT-III proteins mostly dissociate from the invaginating membrane before the ILV is released. The ESCRT machinery also functions in topologically equivalent membrane fission events, such as the terminal stages of cytokinesis and the budding of enveloped viruses (lentiviruses). ESCRT-III proteins are believed to mediate the necessary vesicle extrusion and/or membrane fission activities, possibly in conjunction with the AAA ATPase VPS4. Selectively binds to phosphatidylinositol 3,5-bisphosphate PtdIns(3,5)P2 and PtdIns(3,4)P2 in preference to other phosphoinositides tested. Involved in late stages of cytokinesis. Plays a role in endosomal sorting/trafficking of EGF receptor. The polypeptide is Charged multivesicular body protein 3 (CHMP3) (Bos taurus (Bovine)).